The chain runs to 343 residues: Transcription factor MYB83 (343 aa).

A compositionally biased stretch (basic and acidic residues) spans 1 to 16; sequence MMMRKPDITTIRDKGK. Residues 1–33 form a disordered region; sequence MMMRKPDITTIRDKGKPNHACGGNNNKPKLRKG. 2 consecutive HTH myb-type domains span residues 27-79 and 80-134; these read KPKL…INYL and RPDL…KKRL. 2 DNA-binding regions (H-T-H motif) span residues 55–79 and 107–130; these read WSDI…INYL and WSQI…NSTL. The tract at residues 134–172 is disordered; the sequence is LKNNSNNNTSSGSSPNNSNSNSLDPRDQHVDMGGNSTSL. A compositionally biased stretch (low complexity) spans 136–155; it reads NNSNNNTSSGSSPNNSNSNS.

Expressed specifically in fiber and vessel cells that are undergoing secondary wall thickening in floral stems. Expressed in vessels but not in xylary fibers in the developing secondary xylem of roots.

The protein localises to the nucleus. In terms of biological role, transcription factor that acts as a molecular switch in the NAC012/SND1-mediated transcriptional network regulating secondary wall biosynthesis. Is directly activated by NAC012/SND1 and its close homologs, including NAC043/NST1, NAC066/NST2, NAC101/VND6 and NAC030/VND7. Is required for functional expression of a number of secondary wall-associated transcription factors and secondary wall biosynthetic genes involved in cellulose, xylan and lignin synthesis. Functions redundantly with MYB46 in the transcriptional regulatory cascade leading to secondary wall formation in fibers and vessels. Transcription activator that binds to the DNA consensus sequence 5'-ACC[AT]A[AC][TC]-3', designated as the secondary wall MYB-responsive element (SMRE). Regulates directly numerous transcription factors and a number of genes involved in secondary wall biosynthesis that contain SMRE elements in their promoters. This Arabidopsis thaliana (Mouse-ear cress) protein is Transcription factor MYB83.